We begin with the raw amino-acid sequence, 226 residues long: Peroxynitrite isomerase (226 aa).

Residues 21–27 carry the GXWXGXG motif; that stretch reads GSWEGQG. Residue His-191 coordinates heme b. Residues 201 to 226 form a disordered region; sequence SAAEGRLAPGAERPRGAGGRKQGEQS.

The protein belongs to the nitrobindin family. As to quaternary structure, homodimer. Heme b serves as cofactor.

The enzyme catalyses peroxynitrite = nitrate. It functions in the pathway nitrogen metabolism. In terms of biological role, heme-binding protein able to scavenge peroxynitrite and to protect free L-tyrosine against peroxynitrite-mediated nitration, by acting as a peroxynitrite isomerase that converts peroxynitrite to nitrate. Therefore, this protein likely plays a role in peroxynitrite sensing and in the detoxification of reactive nitrogen and oxygen species (RNS and ROS, respectively). Is able to bind nitric oxide (NO) in vitro, but may act as a sensor of peroxynitrite levels in vivo. In Micrococcus luteus (strain ATCC 4698 / DSM 20030 / JCM 1464 / CCM 169 / CCUG 5858 / IAM 1056 / NBRC 3333 / NCIMB 9278 / NCTC 2665 / VKM Ac-2230) (Micrococcus lysodeikticus), this protein is Peroxynitrite isomerase.